Consider the following 283-residue polypeptide: 4-diphosphocytidyl-2-C-methyl-D-erythritol kinase (283 aa).

Lysine 12 is an active-site residue. Residue 94-104 (PAQAGLGGGSS) coordinates ATP. Aspartate 136 is an active-site residue.

The protein belongs to the GHMP kinase family. IspE subfamily.

The enzyme catalyses 4-CDP-2-C-methyl-D-erythritol + ATP = 4-CDP-2-C-methyl-D-erythritol 2-phosphate + ADP + H(+). The protein operates within isoprenoid biosynthesis; isopentenyl diphosphate biosynthesis via DXP pathway; isopentenyl diphosphate from 1-deoxy-D-xylulose 5-phosphate: step 3/6. In terms of biological role, catalyzes the phosphorylation of the position 2 hydroxy group of 4-diphosphocytidyl-2C-methyl-D-erythritol. This chain is 4-diphosphocytidyl-2-C-methyl-D-erythritol kinase, found in Acidovorax sp. (strain JS42).